A 198-amino-acid polypeptide reads, in one-letter code: Myc target protein 1 homolog (198 aa).

The Bipartite nuclear localization signal motif lies at 52 to 72; sequence RRRASASISPRMPKSSSRRPR. 2 disordered regions span residues 58-83 and 172-198; these read SISP…LNRS and NNSL…FPDS. Residues 172 to 181 show a composition bias toward polar residues; sequence NNSLRLGPST.

This sequence belongs to the MYCT1 family.

Its subcellular location is the nucleus. In terms of biological role, may regulate certain MYC target genes, MYC seems to be a direct upstream transcriptional activator. The chain is Myc target protein 1 homolog (myct1) from Xenopus tropicalis (Western clawed frog).